The primary structure comprises 373 residues: Indole glucosinolate O-methyltransferase 2 (373 aa).

Residues glycine 217, aspartate 240, aspartate 260, methionine 261, and lysine 274 each contribute to the S-adenosyl-L-homocysteine site. Catalysis depends on histidine 278, which acts as the Proton acceptor.

The protein belongs to the class I-like SAM-binding methyltransferase superfamily. Cation-independent O-methyltransferase family.

The protein operates within secondary metabolite biosynthesis. In terms of biological role, involved in indole glucosinolate biosynthesis. Catalyzes methoxylation reactions of the glucosinolate indole ring. Converts the hydroxy intermediates 4-hydroxy-indol-3-yl-methylglucosinolate (4OH-I3M) and 1-hydroxy-indol-3-yl-methylglucosinolate (1OH-I3M) to 4-methoxy-indol-3-yl-methylglucosinolate (4MO-I3M) and 1-methoxy-indol-3-yl-methylglucosinolate (1MO-I3M), respectively. The sequence is that of Indole glucosinolate O-methyltransferase 2 from Arabidopsis thaliana (Mouse-ear cress).